The following is a 120-amino-acid chain: MARHPGLLLILLAAVAAVATTSRAQWVGGWNVIEDVAGNNQIQRVGAWAVGKHNQLGTNDRLQFVRVVAAEEQVVQGSNYLVVIDAASSRKKTRELYVAVVADLVGATTYQLSSFKLATK.

An N-terminal signal peptide occupies residues 1–24 (MARHPGLLLILLAAVAAVATTSRA). Positions 73-77 (QVVQG) match the Secondary area of contact motif.

It belongs to the cystatin family. Phytocystatin subfamily.

The protein localises to the secreted. Its function is as follows. Specific inhibitor of cysteine proteinases. Probably involved in the regulation of endogenous processes and in defense against pests and pathogens. The chain is Putative cysteine proteinase inhibitor 11 from Oryza sativa subsp. japonica (Rice).